A 210-amino-acid chain; its full sequence is Pyridoxine/pyridoxamine 5'-phosphate oxidase (210 aa).

Residues 7–10 (RQSY) and K65 each bind substrate. Residues 60 to 65 (RIVLIK), 75 to 76 (YT), R81, K82, and Q104 each bind FMN. The substrate site is built by Y122, R126, and S130. Residues 139–140 (QS) and W182 contribute to the FMN site. 188-190 (RLH) contacts substrate. An FMN-binding site is contributed by R192.

Belongs to the pyridoxamine 5'-phosphate oxidase family. As to quaternary structure, homodimer. Requires FMN as cofactor.

It carries out the reaction pyridoxamine 5'-phosphate + O2 + H2O = pyridoxal 5'-phosphate + H2O2 + NH4(+). The catalysed reaction is pyridoxine 5'-phosphate + O2 = pyridoxal 5'-phosphate + H2O2. Its pathway is cofactor metabolism; pyridoxal 5'-phosphate salvage; pyridoxal 5'-phosphate from pyridoxamine 5'-phosphate: step 1/1. It participates in cofactor metabolism; pyridoxal 5'-phosphate salvage; pyridoxal 5'-phosphate from pyridoxine 5'-phosphate: step 1/1. In terms of biological role, catalyzes the oxidation of either pyridoxine 5'-phosphate (PNP) or pyridoxamine 5'-phosphate (PMP) into pyridoxal 5'-phosphate (PLP). The protein is Pyridoxine/pyridoxamine 5'-phosphate oxidase of Bordetella petrii (strain ATCC BAA-461 / DSM 12804 / CCUG 43448).